A 478-amino-acid chain; its full sequence is Cysteine protease ATG4B (478 aa).

Residues 1–15 show a composition bias toward polar residues; the sequence is MTSLPDRGVSSSSSD. Residues 1-20 are disordered; the sequence is MTSLPDRGVSSSSSDPLCEG. Catalysis depends on Cys164, which acts as the Nucleophile. Catalysis depends on residues Asp361 and His363.

Belongs to the peptidase C54 family. As to quaternary structure, interacts with ATG8. Constitutively expressed.

It is found in the cytoplasm. The catalysed reaction is [protein]-C-terminal L-amino acid-glycyl-phosphatidylethanolamide + H2O = [protein]-C-terminal L-amino acid-glycine + a 1,2-diacyl-sn-glycero-3-phosphoethanolamine. Cysteine protease that plays a key role in autophagy by mediating both proteolytic activation and delipidation of ATG8 family proteins. The protease activity is required for proteolytic activation of ATG8 family proteins: cleaves the C-terminal amino acid of ATG8 proteins to reveal a C-terminal glycine. Exposure of the glycine at the C-terminus is essential for ATG8 proteins conjugation to phosphatidylethanolamine (PE) and insertion to membranes, which is necessary for autophagy. In addition to the protease activity, also mediates delipidation of PE-conjugated ATG8 proteins. The sequence is that of Cysteine protease ATG4B (ATG4B) from Oryza sativa subsp. indica (Rice).